A 658-amino-acid chain; its full sequence is DNA mismatch repair protein MutL (658 aa).

Disordered stretches follow at residues 114-137 (RQND…PTAA) and 437-456 (RFGN…PLSD). The segment covering 442 to 456 (PSETPAPQTDTPLSD) has biased composition (polar residues).

This sequence belongs to the DNA mismatch repair MutL/HexB family.

This protein is involved in the repair of mismatches in DNA. It is required for dam-dependent methyl-directed DNA mismatch repair. May act as a 'molecular matchmaker', a protein that promotes the formation of a stable complex between two or more DNA-binding proteins in an ATP-dependent manner without itself being part of a final effector complex. The sequence is that of DNA mismatch repair protein MutL from Neisseria meningitidis serogroup B (strain ATCC BAA-335 / MC58).